Consider the following 197-residue polypeptide: Translation machinery-associated protein 22 (197 aa).

The SUI1 domain occupies 102–173 (VQIKRVERNK…DVKEWLLEVY (72 aa)).

It belongs to the DENR family. As to quaternary structure, interacts with the 40S ribosomal subunit.

The protein localises to the cytoplasm. The chain is Translation machinery-associated protein 22 (tma22) from Aspergillus niger (strain ATCC MYA-4892 / CBS 513.88 / FGSC A1513).